The following is a 206-amino-acid chain: Ribonuclease HII (206 aa).

An RNase H type-2 domain is found at 18–206; sequence LRIAGVDEVG…PVHNILYQEK (189 aa). 3 residues coordinate a divalent metal cation: D24, E25, and D115.

Belongs to the RNase HII family. It depends on Mn(2+) as a cofactor. Requires Mg(2+) as cofactor.

The protein localises to the cytoplasm. The enzyme catalyses Endonucleolytic cleavage to 5'-phosphomonoester.. In terms of biological role, endonuclease that specifically degrades the RNA of RNA-DNA hybrids. The polypeptide is Ribonuclease HII (Dinoroseobacter shibae (strain DSM 16493 / NCIMB 14021 / DFL 12)).